We begin with the raw amino-acid sequence, 693 residues long: Tegument protein UL47 (693 aa).

Disordered regions lie at residues 1–32 (MSAREPAGRRRRASTRPRASPVADEPAGDGVG) and 48–126 (ELEA…GYLG). The span at 48 to 57 (ELEALEEMAG) shows a compositional bias: acidic residues. Residues 50–75 (EALEEMAGDEPPVRRRREGPRARRRR) form an RNA-binding region. The short motif at 63–75 (RRRREGPRARRRR) is the Nuclear localization signal element. Basic residues predominate over residues 63–75 (RRRREGPRARRRR). Positions 647–670 (SVLGPRVRVVDIMSQFRKLLMGDE) match the Nuclear export signal motif.

Belongs to the alphaherpesvirinae HHV-1 UL47 family. Interacts with US3 kinase. Interacts with UL31 and UL34; these interactions seem important for efficient virion nuclear egress. Interacts with UL41/VHS. In terms of processing, phosphorylated by US3. This phosphorylation is required for proper nuclear localization.

It is found in the virion tegument. The protein resides in the host nucleus. The protein localises to the host cytoplasm. Functionally, tegument protein that can bind to various RNA transcripts. Plays a role in the attenuation of selective viral and cellular mRNA degradation by modulating the activity of host shutoff RNase UL41/VHS. Also plays a role in the primary envelopment of virions in the perinuclear space, probably by interacting with two nuclear egress proteins UL31 and UL34. The sequence is that of Tegument protein UL47 from Homo sapiens (Human).